A 311-amino-acid chain; its full sequence is Succinate dehydrogenase [ubiquinone] iron-sulfur subunit 2, mitochondrial (311 aa).

The transit peptide at 1-63 (MILRRTLPRL…EEIRDHRRGD (63 aa)) directs the protein to the mitochondrion. The interval 1–70 (MILRRTLPRL…RGDAAAASPA (70 aa)) is disordered. Residues 51–63 (AKEEEIRDHRRGD) are compositionally biased toward basic and acidic residues. The 2Fe-2S ferredoxin-type domain maps to 77-168 (FRVYRWSPDA…ATTVTPLPHM (92 aa)). The [2Fe-2S] cluster site is built by cysteine 128, cysteine 133, and cysteine 148. The 31-residue stretch at 211-241 (ERKRLDGLYECILCACCSAACPSYWWNAEAF) folds into the 4Fe-4S ferredoxin-type domain. [4Fe-4S] cluster is bound by residues cysteine 221, cysteine 224, and cysteine 227. Cysteine 231 contributes to the [3Fe-4S] cluster binding site. A ubiquinone is bound at residue tryptophan 236. [3Fe-4S] cluster-binding residues include cysteine 279 and cysteine 285. [4Fe-4S] cluster is bound at residue cysteine 289.

It belongs to the succinate dehydrogenase/fumarate reductase iron-sulfur protein family. In terms of assembly, component of complex II composed of eight subunits in plants: four classical SDH subunits SDH1, SDH2, SDH3 and SDH4 (a flavoprotein (FP), an iron-sulfur protein (IP), and a cytochrome b composed of a large and a small subunit.), as well as four subunits unknown in mitochondria from bacteria and heterotrophic eukaryotes. It depends on [2Fe-2S] cluster as a cofactor. [3Fe-4S] cluster serves as cofactor. [4Fe-4S] cluster is required as a cofactor.

It localises to the mitochondrion inner membrane. The enzyme catalyses a quinone + succinate = fumarate + a quinol. It participates in carbohydrate metabolism; tricarboxylic acid cycle; fumarate from succinate (eukaryal route): step 1/1. Iron-sulfur protein (IP) subunit of succinate dehydrogenase (SDH) that is involved in complex II of the mitochondrial electron transport chain and is responsible for transferring electrons from succinate to ubiquinone (coenzyme Q). This chain is Succinate dehydrogenase [ubiquinone] iron-sulfur subunit 2, mitochondrial, found in Oryza sativa subsp. japonica (Rice).